The following is a 274-amino-acid chain: 2,3,4,5-tetrahydropyridine-2,6-dicarboxylate N-succinyltransferase (274 aa).

Residues arginine 104 and aspartate 141 each coordinate substrate.

It belongs to the transferase hexapeptide repeat family. As to quaternary structure, homotrimer.

It is found in the cytoplasm. The enzyme catalyses (S)-2,3,4,5-tetrahydrodipicolinate + succinyl-CoA + H2O = (S)-2-succinylamino-6-oxoheptanedioate + CoA. It participates in amino-acid biosynthesis; L-lysine biosynthesis via DAP pathway; LL-2,6-diaminopimelate from (S)-tetrahydrodipicolinate (succinylase route): step 1/3. The protein is 2,3,4,5-tetrahydropyridine-2,6-dicarboxylate N-succinyltransferase of Shewanella oneidensis (strain ATCC 700550 / JCM 31522 / CIP 106686 / LMG 19005 / NCIMB 14063 / MR-1).